The chain runs to 229 residues: Ribonuclease 3 (229 aa).

An RNase III domain is found at 4–133; the sequence is WEELQESVGF…FIGALYLDNG (130 aa). A Mg(2+)-binding site is contributed by Glu-46. Asp-50 is an active-site residue. Mg(2+)-binding residues include Asp-119 and Glu-122. The active site involves Glu-122. The DRBM domain maps to 159–228; the sequence is DYKTQLQEIV…AQFAINKLIH (70 aa).

This sequence belongs to the ribonuclease III family. In terms of assembly, homodimer. Requires Mg(2+) as cofactor.

It is found in the cytoplasm. It catalyses the reaction Endonucleolytic cleavage to 5'-phosphomonoester.. In terms of biological role, digests double-stranded RNA. Involved in the processing of primary rRNA transcript to yield the immediate precursors to the large and small rRNAs (23S and 16S). Processes some mRNAs, and tRNAs when they are encoded in the rRNA operon. Processes pre-crRNA and tracrRNA of type II CRISPR loci if present in the organism. The polypeptide is Ribonuclease 3 (Listeria monocytogenes serovar 1/2a (strain ATCC BAA-679 / EGD-e)).